The chain runs to 117 residues: NADPH-dependent 7-cyano-7-deazaguanine reductase (117 aa).

C31 (thioimide intermediate) is an active-site residue. D38 serves as the catalytic Proton donor. Substrate is bound by residues 53–55 and 72–73; these read IEL and YE.

This sequence belongs to the GTP cyclohydrolase I family. QueF type 1 subfamily.

It localises to the cytoplasm. The catalysed reaction is 7-aminomethyl-7-carbaguanine + 2 NADP(+) = 7-cyano-7-deazaguanine + 2 NADPH + 3 H(+). It participates in tRNA modification; tRNA-queuosine biosynthesis. Catalyzes the NADPH-dependent reduction of 7-cyano-7-deazaguanine (preQ0) to 7-aminomethyl-7-deazaguanine (preQ1). This chain is NADPH-dependent 7-cyano-7-deazaguanine reductase, found in Chlorobaculum tepidum (strain ATCC 49652 / DSM 12025 / NBRC 103806 / TLS) (Chlorobium tepidum).